A 481-amino-acid polypeptide reads, in one-letter code: Delta 4,5-hexuronate-2-O-sulfatase (481 aa).

A 3-oxoalanine (Ser) modification is found at S64. 4 residues coordinate Zn(2+): C225, C226, H462, and H469. Residues 453–481 form a disordered region; it reads VDADPRCRNHTPGYPSHEGPGAREILKRK. Over residues 472–481 the composition is skewed to basic and acidic residues; it reads PGAREILKRK.

Belongs to the sulfatase family. The cofactor is Zn(2+). Post-translationally, the conversion to 3-oxoalanine (also known as C-formylglycine, FGly), of a serine or cysteine residue in prokaryotes and of a cysteine residue in eukaryotes, is critical for catalytic activity.

In terms of biological role, exosulfatase involved in the degradation of the glycosaminoglycans (GAGs) chondroitin sulfate (CS), dermatan sulfate (DS) and heparan sulfate (HS). 2-O-sulfatase active on unsaturated non-reducing end hexuronate units. Has a slight preference for HS-derived structures. GAG-specific sulfatases play a key role in the persistence of the major human gut symbiont B.thetaiotaomicron in the host gastrointestinal tract. This is Delta 4,5-hexuronate-2-O-sulfatase from Bacteroides thetaiotaomicron (strain ATCC 29148 / DSM 2079 / JCM 5827 / CCUG 10774 / NCTC 10582 / VPI-5482 / E50).